Consider the following 539-residue polypeptide: T-complex protein 1 subunit zeta (539 aa).

Belongs to the TCP-1 chaperonin family. In terms of assembly, heterooligomeric complex of about 850 to 900 kDa that forms two stacked rings, 12 to 16 nm in diameter.

It is found in the cytoplasm. Molecular chaperone; assists the folding of proteins upon ATP hydrolysis. Known to play a role, in vitro, in the folding of actin and tubulin. This is T-complex protein 1 subunit zeta (cct-6) from Caenorhabditis elegans.